A 556-amino-acid polypeptide reads, in one-letter code: Urocanate hydratase (556 aa).

NAD(+)-binding positions include 52–53, Q130, 176–178, E196, R201, 242–243, 263–267, 273–274, and Y322; these read GG, GMG, NA, QTSAH, and YL. The active site involves C410. G492 contacts NAD(+).

Belongs to the urocanase family. NAD(+) serves as cofactor.

The protein resides in the cytoplasm. The enzyme catalyses 4-imidazolone-5-propanoate = trans-urocanate + H2O. It participates in amino-acid degradation; L-histidine degradation into L-glutamate; N-formimidoyl-L-glutamate from L-histidine: step 2/3. Its function is as follows. Catalyzes the conversion of urocanate to 4-imidazolone-5-propionate. The polypeptide is Urocanate hydratase (Bradyrhizobium sp. (strain BTAi1 / ATCC BAA-1182)).